Consider the following 248-residue polypeptide: UPF0736 protein BCG9842_B4111 (248 aa).

Belongs to the UPF0736 family.

In Bacillus cereus (strain G9842), this protein is UPF0736 protein BCG9842_B4111.